The sequence spans 119 residues: Beta-2-microglobulin (119 aa).

Residues methionine 1–threonine 20 form the signal peptide. One can recognise an Ig-like C1-type domain in the interval proline 25–lysine 114. A disulfide bond links cysteine 45 and cysteine 100.

The protein belongs to the beta-2-microglobulin family. In terms of assembly, heterodimer of an alpha chain and a beta chain. Beta-2-microglobulin is the beta-chain of major histocompatibility complex class I molecules.

It is found in the secreted. Its function is as follows. Component of the class I major histocompatibility complex (MHC). Involved in the presentation of peptide antigens to the immune system. The chain is Beta-2-microglobulin (B2M) from Callicebus personatus nigrifrons (Black-fronted titi).